A 445-amino-acid chain; its full sequence is Probable glycine dehydrogenase (decarboxylating) subunit 1 (445 aa).

This sequence belongs to the GcvP family. N-terminal subunit subfamily. As to quaternary structure, the glycine cleavage system is composed of four proteins: P, T, L and H. In this organism, the P 'protein' is a heterodimer of two subunits.

The enzyme catalyses N(6)-[(R)-lipoyl]-L-lysyl-[glycine-cleavage complex H protein] + glycine + H(+) = N(6)-[(R)-S(8)-aminomethyldihydrolipoyl]-L-lysyl-[glycine-cleavage complex H protein] + CO2. Its function is as follows. The glycine cleavage system catalyzes the degradation of glycine. The P protein binds the alpha-amino group of glycine through its pyridoxal phosphate cofactor; CO(2) is released and the remaining methylamine moiety is then transferred to the lipoamide cofactor of the H protein. The chain is Probable glycine dehydrogenase (decarboxylating) subunit 1 from Chlorobium chlorochromatii (strain CaD3).